We begin with the raw amino-acid sequence, 485 residues long: Caspid protein (485 aa).

Asn5 and Asn178 each carry an N-linked (GlcNAc...) asparagine; by host glycan. Residues 236–262 are particle formation; sequence IALTLFNLADTLLGGLPTELISSAGGQ. Asn430 carries N-linked (GlcNAc...) asparagine; by host glycosylation. The interval 453–478 is oligomerization; the sequence is TTSLGAGPVSISAVAVLAPHSALALL.

This sequence belongs to the hepevirus capsid protein family. Self-assembles to form the capsid. The capsid is dominated by dimers that define the 30 morphological units. Interacts with phosphorylated protein ORF3. Interacts with host TMEM134. Interacts with host ASGR1 and ASGR2; these interactions facilitate infection of host hepatocytes. Post-translationally, not N-glycosylated.

It localises to the virion. It is found in the host cytoplasm. Its subcellular location is the host endoplasmic reticulum. The protein localises to the host Golgi apparatus. The protein resides in the host cell surface. It localises to the host nucleus. Functionally, forms an icosahedral capsid with a T=1 symmetry and a 34 nm diameter. The capsid is composed of 60 copies linked to each other. Binds to the 5' end of the genomic RNA to mediate genome encapsidation. Binds to heparin surface proteoglycans (HSPGs) to mediate viral entry. Additionally, the interactions with host ASGR1 and ASGR2 facilitate viral infection of hepatocytes. Inhibits IFN production by blocking host TBK1-induced IRF3 phosphorylation. The nuclear form probably modulates host gene expression. The chain is Caspid protein from Hepatitis E virus (isolate Rhesus/HT-4) (HEV).